A 96-amino-acid polypeptide reads, in one-letter code: Large ribosomal subunit protein eL14 (96 aa).

It belongs to the eukaryotic ribosomal protein eL14 family.

This Saccharolobus islandicus (strain Y.N.15.51 / Yellowstone #2) (Sulfolobus islandicus) protein is Large ribosomal subunit protein eL14.